The following is a 473-amino-acid chain: GTPase Der (473 aa).

2 EngA-type G domains span residues 3-166 (PVIA…ENPE) and 177-350 (IRIG…ESAM). Residues 9–16 (GRPNVGKS), 56–60 (DTGGL), 118–121 (NKTD), 183–190 (GRPNVGKS), 230–234 (DTAGV), and 295–298 (NKWD) each bind GTP. In terms of domain architecture, KH-like spans 351 to 435 (SKWPTNRLTA…PIRFEFKSGE (85 aa)). Residues 444–458 (RLTPRQKVKKDNDLK) are compositionally biased toward basic and acidic residues. A disordered region spans residues 444–473 (RLTPRQKVKKDNDLKKGRRIKKTRQKSVKR). Residues 459–473 (KGRRIKKTRQKSVKR) show a composition bias toward basic residues.

Belongs to the TRAFAC class TrmE-Era-EngA-EngB-Septin-like GTPase superfamily. EngA (Der) GTPase family. Associates with the 50S ribosomal subunit.

Functionally, GTPase that plays an essential role in the late steps of ribosome biogenesis. In Marinobacter nauticus (strain ATCC 700491 / DSM 11845 / VT8) (Marinobacter aquaeolei), this protein is GTPase Der.